The primary structure comprises 381 residues: Queuine tRNA-ribosyltransferase (381 aa).

The active-site Proton acceptor is the D96. Residues 96-100 (DSGGF), D150, Q193, and G220 each bind substrate. The interval 251 to 257 (GVGSPDS) is RNA binding. D270 serves as the catalytic Nucleophile. The RNA binding; important for wobble base 34 recognition stretch occupies residues 275 to 279 (TRIAR). 4 residues coordinate Zn(2+): C308, C310, C313, and H339.

Belongs to the queuine tRNA-ribosyltransferase family. In terms of assembly, homodimer. Within each dimer, one monomer is responsible for RNA recognition and catalysis, while the other monomer binds to the replacement base PreQ1. Requires Zn(2+) as cofactor.

The catalysed reaction is 7-aminomethyl-7-carbaguanine + guanosine(34) in tRNA = 7-aminomethyl-7-carbaguanosine(34) in tRNA + guanine. It functions in the pathway tRNA modification; tRNA-queuosine biosynthesis. Its function is as follows. Catalyzes the base-exchange of a guanine (G) residue with the queuine precursor 7-aminomethyl-7-deazaguanine (PreQ1) at position 34 (anticodon wobble position) in tRNAs with GU(N) anticodons (tRNA-Asp, -Asn, -His and -Tyr). Catalysis occurs through a double-displacement mechanism. The nucleophile active site attacks the C1' of nucleotide 34 to detach the guanine base from the RNA, forming a covalent enzyme-RNA intermediate. The proton acceptor active site deprotonates the incoming PreQ1, allowing a nucleophilic attack on the C1' of the ribose to form the product. After dissociation, two additional enzymatic reactions on the tRNA convert PreQ1 to queuine (Q), resulting in the hypermodified nucleoside queuosine (7-(((4,5-cis-dihydroxy-2-cyclopenten-1-yl)amino)methyl)-7-deazaguanosine). In Lysinibacillus sphaericus (strain C3-41), this protein is Queuine tRNA-ribosyltransferase.